A 338-amino-acid polypeptide reads, in one-letter code: Egl nine homolog 1 (338 aa).

Residues P1 to R11 are compositionally biased toward low complexity. The interval P1–Q99 is disordered. S52 carries the phosphoserine modification. 2 positions are modified to S-nitrosocysteine: C116 and C123. The tract at residues V156 to I166 is beta(2)beta(3) 'finger-like' loop. Positions G209–D307 constitute a Fe2OG dioxygenase domain. C217 carries the post-translational modification S-nitrosocysteine. Fe cation contacts are provided by H228 and D230. An S-nitrosocysteine mark is found at C238 and C241. H289 contributes to the Fe cation binding site. R298 is a binding site for 2-oxoglutarate.

In terms of assembly, monomer. Interacts with ING4; the interaction inhibits the hydroxylation of HIF alpha proteins. Interacts with PTGES3 (via PXLE motif); thereby recruiting EGLN1 to the HSP90 pathway to facilitate HIF alpha proteins hydroxylation. Interacts with LIMD1. Found in a complex composed of LIMD1, VHL, EGLN1/PHD2, ELOB and CUL2. Interacts with EPAS1. Interacts with CBFA2T3 and HIF1A. It depends on Fe(2+) as a cofactor. Requires L-ascorbate as cofactor. In terms of processing, S-nitrosylation inhibits the enzyme activity up to 60% under aerobic conditions. Chelation of Fe(2+) has no effect on the S-nitrosylation. It is uncertain whether nitrosylation occurs on Cys-238 or Cys-241. In terms of tissue distribution, expressed in heart, liver, kidney, brain, liver and testis. Highest levels in heart, lowest in liver.

Its subcellular location is the cytoplasm. The protein localises to the nucleus. It carries out the reaction L-prolyl-[hypoxia-inducible factor alpha subunit] + 2-oxoglutarate + O2 = trans-4-hydroxy-L-prolyl-[hypoxia-inducible factor alpha subunit] + succinate + CO2. Increased activation in hypoxia. Hydroxylation of the C-terminal ODD domain (CODD) proline of HIF1A is activated by cyclosporin A (CsA). Its function is as follows. Cellular oxygen sensor that catalyzes, under normoxic conditions, the post-translational formation of 4-hydroxyproline in hypoxia-inducible factor (HIF) alpha proteins. Hydroxylates a specific proline found in each of the oxygen-dependent degradation (ODD) domains (N-terminal, NODD, and C-terminal, CODD) of HIF1A. Also hydroxylates HIF2A. Has a preference for the CODD site for both HIF1A and HIF1B. Hydroxylated HIFs are then targeted for proteasomal degradation via the von Hippel-Lindau ubiquitination complex. Under hypoxic conditions, the hydroxylation reaction is attenuated allowing HIFs to escape degradation resulting in their translocation to the nucleus, heterodimerization with HIF1B, and increased expression of hypoxy-inducible genes. EGLN1 is the most important isozyme under normoxia and, through regulating the stability of HIF1, involved in various hypoxia-influenced processes such as angiogenesis in retinal and cardiac functionality. Target proteins are preferentially recognized via a LXXLAP motif. The polypeptide is Egl nine homolog 1 (Egln1) (Rattus norvegicus (Rat)).